Reading from the N-terminus, the 122-residue chain is UPF0145 protein TV0671 (122 aa).

It belongs to the UPF0145 family.

The polypeptide is UPF0145 protein TV0671 (Thermoplasma volcanium (strain ATCC 51530 / DSM 4299 / JCM 9571 / NBRC 15438 / GSS1)).